We begin with the raw amino-acid sequence, 255 residues long: Cytochrome c oxidase subunit 2 (255 aa).

Residues 1 to 42 (MKFFFFSFINYKVLNDAARPWQIGFQDPATPIMEGIVNLHHD) lie on the Mitochondrial intermembrane side of the membrane. Residues 43–63 (IIFFLIIIIIFVSWILFRTLF) form a helical membrane-spanning segment. Over 64–83 (LFNSKTNPVAYNFSHGTFIE) the chain is Mitochondrial matrix. A helical membrane pass occupies residues 84–104 (LLWTLTPSLVLIGIAVPSFAL). Topologically, residues 105-255 (LYSIDEIIDP…IRWVQNKILD (151 aa)) are mitochondrial intermembrane. Cu cation is bound by residues histidine 187, cysteine 222, glutamate 224, cysteine 226, histidine 230, and methionine 233. Glutamate 224 is a binding site for Mg(2+).

This sequence belongs to the cytochrome c oxidase subunit 2 family. Component of the cytochrome c oxidase (complex IV, CIV), a multisubunit enzyme composed of a catalytic core of 3 subunits and several supernumerary subunits. The complex exists as a monomer or a dimer and forms supercomplexes (SCs) in the inner mitochondrial membrane with ubiquinol-cytochrome c oxidoreductase (cytochrome b-c1 complex, complex III, CIII). Requires Cu cation as cofactor.

Its subcellular location is the mitochondrion inner membrane. The catalysed reaction is 4 Fe(II)-[cytochrome c] + O2 + 8 H(+)(in) = 4 Fe(III)-[cytochrome c] + 2 H2O + 4 H(+)(out). Functionally, component of the cytochrome c oxidase, the last enzyme in the mitochondrial electron transport chain which drives oxidative phosphorylation. The respiratory chain contains 3 multisubunit complexes succinate dehydrogenase (complex II, CII), ubiquinol-cytochrome c oxidoreductase (cytochrome b-c1 complex, complex III, CIII) and cytochrome c oxidase (complex IV, CIV), that cooperate to transfer electrons derived from NADH and succinate to molecular oxygen, creating an electrochemical gradient over the inner membrane that drives transmembrane transport and the ATP synthase. Cytochrome c oxidase is the component of the respiratory chain that catalyzes the reduction of oxygen to water. Electrons originating from reduced cytochrome c in the intermembrane space (IMS) are transferred via the dinuclear copper A center (CU(A)) of subunit 2 and heme A of subunit 1 to the active site in subunit 1, a binuclear center (BNC) formed by heme A3 and copper B (CU(B)). The BNC reduces molecular oxygen to 2 water molecules using 4 electrons from cytochrome c in the IMS and 4 protons from the mitochondrial matrix. This chain is Cytochrome c oxidase subunit 2 (COX2), found in Cyanidium caldarium (Red alga).